The primary structure comprises 83 residues: Kappa-theraphotoxin-Cg2b (83 aa).

The first 21 residues, 1–21 (MKGSAFAIILGLVVLCACSFA), serve as a signal peptide directing secretion. Residues 22–53 (EDEQDQFASPNELLRSMFLESRHELIPEVEGR) constitute a propeptide that is removed on maturation. 3 disulfides stabilise this stretch: C55–C69, C62–C74, and C68–C78.

This sequence belongs to the neurotoxin 30 (phrixotoxin) family. As to expression, expressed by the venom gland.

The protein localises to the secreted. In terms of biological role, probable ion channel inhibitor. This is Kappa-theraphotoxin-Cg2b from Chilobrachys guangxiensis (Chinese earth tiger tarantula).